A 380-amino-acid chain; its full sequence is Tubulin alpha chain (380 aa).

Residues E46, S115, G119, T120, T154, N181, and N202 each contribute to the GTP site. Residue E46 participates in Mg(2+) binding. E228 is an active-site residue.

It belongs to the tubulin family. In terms of assembly, dimer of alpha and beta chains. A typical microtubule is a hollow water-filled tube with an outer diameter of 25 nm and an inner diameter of 15 nM. Alpha-beta heterodimers associate head-to-tail to form protofilaments running lengthwise along the microtubule wall with the beta-tubulin subunit facing the microtubule plus end conferring a structural polarity. Microtubules usually have 13 protofilaments but different protofilament numbers can be found in some organisms and specialized cells. Requires Mg(2+) as cofactor.

Its subcellular location is the cytoplasm. The protein localises to the cytoskeleton. The catalysed reaction is GTP + H2O = GDP + phosphate + H(+). In terms of biological role, tubulin is the major constituent of microtubules, a cylinder consisting of laterally associated linear protofilaments composed of alpha- and beta-tubulin heterodimers. Microtubules grow by the addition of GTP-tubulin dimers to the microtubule end, where a stabilizing cap forms. Below the cap, tubulin dimers are in GDP-bound state, owing to GTPase activity of alpha-tubulin. The chain is Tubulin alpha chain (TUB1) from Encephalitozoon hellem (Microsporidian parasite).